The sequence spans 88 residues: Homeobox protein knotted-1-like 2 (88 aa).

The 21-residue stretch at 4 to 24 (ELKHELKQGYRDKLVDIREEI) folds into the ELK domain. A DNA-binding region (homeobox; TALE-type) is located at residues 25-88 (LRKRRAGKLP…NQRKRNWHNN (64 aa)).

Belongs to the TALE/KNOX homeobox family. Expressed in all tissues examined. Highest expression in leaves.

Its subcellular location is the nucleus. The protein is Homeobox protein knotted-1-like 2 (KNOX2) of Zea mays (Maize).